A 179-amino-acid chain; its full sequence is Adenylyl-sulfate kinase (179 aa).

13-20 (GLSGAGKS) contributes to the ATP binding site. Ser87 acts as the Phosphoserine intermediate in catalysis.

Belongs to the APS kinase family.

It carries out the reaction adenosine 5'-phosphosulfate + ATP = 3'-phosphoadenylyl sulfate + ADP + H(+). It functions in the pathway sulfur metabolism; hydrogen sulfide biosynthesis; sulfite from sulfate: step 2/3. Functionally, catalyzes the synthesis of activated sulfate. The polypeptide is Adenylyl-sulfate kinase (Paraburkholderia xenovorans (strain LB400)).